Here is a 208-residue protein sequence, read N- to C-terminus: Small ribosomal subunit protein uS3 (208 aa).

Residues 17–86 (IDEYLEKELR…NPQIEVEEIK (70 aa)) form the KH type-2 domain.

This sequence belongs to the universal ribosomal protein uS3 family. As to quaternary structure, part of the 30S ribosomal subunit.

Its function is as follows. Binds the lower part of the 30S subunit head. This is Small ribosomal subunit protein uS3 from Thermococcus onnurineus (strain NA1).